The sequence spans 205 residues: Mediator of RNA polymerase II transcription subunit 29 (205 aa).

The span at 1-27 (MNPNMNMMQMSGPPMMQVSPMMQSSPQ) shows a compositional bias: low complexity. A disordered region spans residues 1–65 (MNPNMNMMQM…QQQQQQAEKL (65 aa)). The segment covering 28 to 38 (PMMPTGPPGPV) has biased composition (pro residues). Over residues 39 to 61 (PMQQQHQQQQQQQQQQQQQQQQQ) the composition is skewed to low complexity.

Belongs to the Mediator complex subunit 29 family. As to quaternary structure, component of the Mediator complex.

It localises to the nucleus. Functionally, component of the Mediator complex, a coactivator involved in the regulated transcription of nearly all RNA polymerase II-dependent genes. Mediator functions as a bridge to convey information from gene-specific regulatory proteins to the basal RNA polymerase II transcription machinery. Mediator is recruited to promoters by direct interactions with regulatory proteins and serves as a scaffold for the assembly of a functional preinitiation complex with RNA polymerase II and the general transcription factors. This Drosophila virilis (Fruit fly) protein is Mediator of RNA polymerase II transcription subunit 29 (ix).